A 271-amino-acid chain; its full sequence is MGHMVNAIYQIDEFVNLGANSIETDVSFDDNANPEYTYRGIPCDCGRSCLKWENYNDFLKGLRSATTPGNSKYQSKLILVVFDLKTGSLYDNQASEAGKKLAKNLLKHYWNNGNNGGRAYIVLSIPDLNHYPLIKGFTDTLKQEGHPELLEKVGYDFSGNDAIGDVAKAYKKAGVSGHVWQSDGITNCLLRGLSRVKDAVANRDSGKGYINKVYYWTVDKRATTRDALDAGVDGVMTNYPDVIADVMNEAAYKNKVRLATYEDSPWVTFKK.

The active site involves histidine 3. Residues glutamate 23 and aspartate 25 each coordinate Mg(2+). Intrachain disulfides connect cysteine 43–cysteine 49 and cysteine 45–cysteine 188. Residue aspartate 83 coordinates Mg(2+).

The protein belongs to the arthropod phospholipase D family. Class II subfamily. Mg(2+) is required as a cofactor. Expressed by the venom gland.

It localises to the secreted. The enzyme catalyses an N-(acyl)-sphingosylphosphocholine = an N-(acyl)-sphingosyl-1,3-cyclic phosphate + choline. It carries out the reaction an N-(acyl)-sphingosylphosphoethanolamine = an N-(acyl)-sphingosyl-1,3-cyclic phosphate + ethanolamine. The catalysed reaction is a 1-acyl-sn-glycero-3-phosphocholine = a 1-acyl-sn-glycero-2,3-cyclic phosphate + choline. It catalyses the reaction a 1-acyl-sn-glycero-3-phosphoethanolamine = a 1-acyl-sn-glycero-2,3-cyclic phosphate + ethanolamine. Dermonecrotic toxins cleave the phosphodiester linkage between the phosphate and headgroup of certain phospholipids (sphingolipid and lysolipid substrates), forming an alcohol (often choline) and a cyclic phosphate. This toxin acts on sphingomyelin (SM). It may also act on ceramide phosphoethanolamine (CPE), lysophosphatidylcholine (LPC) and lysophosphatidylethanolamine (LPE), but not on lysophosphatidylserine (LPS), and lysophosphatidylglycerol (LPG). It acts by transphosphatidylation, releasing exclusively cyclic phosphate products as second products. Induces dermonecrosis, hemolysis, increased vascular permeability, edema, inflammatory response, and platelet aggregation. The polypeptide is Dermonecrotic toxin LhSicTox-alphaIA2bv (Loxosceles hirsuta (Recluse spider)).